A 363-amino-acid polypeptide reads, in one-letter code: Isopentenyl-diphosphate delta-isomerase (363 aa).

Residue 15 to 16 coordinates substrate; the sequence is RK. FMN is bound by residues Ser73, 74 to 76, Ser104, and Asn133; that span reads SMT. 104–106 is a substrate binding site; the sequence is SMR. Substrate is bound at residue Gln168. Position 169 (Glu169) interacts with Mg(2+). Residues Lys200, Thr230, and 313 to 314 contribute to the FMN site; that span reads AG.

The protein belongs to the IPP isomerase type 2 family. Homooctamer. Dimer of tetramers. The cofactor is FMN. NADPH is required as a cofactor. Requires Mg(2+) as cofactor.

Its subcellular location is the cytoplasm. It carries out the reaction isopentenyl diphosphate = dimethylallyl diphosphate. Functionally, involved in the biosynthesis of isoprenoids. Catalyzes the 1,3-allylic rearrangement of the homoallylic substrate isopentenyl (IPP) to its allylic isomer, dimethylallyl diphosphate (DMAPP). This is Isopentenyl-diphosphate delta-isomerase from Chlorobium phaeobacteroides (strain DSM 266 / SMG 266 / 2430).